Consider the following 149-residue polypeptide: MYIGSSMDIQTILEKTLPGLGYELVDFELTAQGTLRVFIDKESGITVEDCATVSNHLSRVFMVEDIDYKNLEISSPGLDRPLKKAADFVRFAGQNAKIKTRLPIDGQKNFIGKIEGCENDTVTVSFDGKTVQIELGNIDKARLRPEFKF.

The protein belongs to the RimP family.

It localises to the cytoplasm. In terms of biological role, required for maturation of 30S ribosomal subunits. The protein is Ribosome maturation factor RimP of Neisseria meningitidis serogroup A / serotype 4A (strain DSM 15465 / Z2491).